Reading from the N-terminus, the 204-residue chain is Large ribosomal subunit protein bL17 (204 aa).

Residues Gln124–Ser204 form a disordered region. Basic and acidic residues predominate over residues Glu128–Lys142. Residues Ser156–Val191 are compositionally biased toward low complexity. The segment covering Glu192–Ser204 has biased composition (acidic residues).

Belongs to the bacterial ribosomal protein bL17 family. As to quaternary structure, part of the 50S ribosomal subunit. Contacts protein L32.

This is Large ribosomal subunit protein bL17 from Frankia alni (strain DSM 45986 / CECT 9034 / ACN14a).